Reading from the N-terminus, the 1165-residue chain is Protein hsr-9 (1165 aa).

4 disordered regions span residues 1 to 26, 70 to 578, 608 to 713, and 874 to 913; these read MASS…PTTT, AEDE…TEME, KYSM…IPLK, and TRAR…EEEE. A compositionally biased stretch (low complexity) spans 16–26; the sequence is TVTQTSLPTTT. 3 stretches are compositionally biased toward basic and acidic residues: residues 98–114, 123–140, and 149–162; these read KDAK…KSES, TFEK…KLDI, and DTEK…KVVG. Composition is skewed to acidic residues over residues 163 to 179, 211 to 230, and 280 to 289; these read DEDE…DEDE, EKEE…EVEV, and GESEANEENQ. Over residues 306-317 the composition is skewed to polar residues; it reads ATVSSTPSSNTP. Residues 397–408 show a composition bias toward basic and acidic residues; sequence NTEHPTEEETPK. Positions 415 to 431 are enriched in low complexity; that stretch reads SAASSSATSSAVPTPRS. Residues 446 to 461 are compositionally biased toward basic and acidic residues; that stretch reads LQEKETEDPTKTHDTN. Residues 533–543 show a composition bias toward acidic residues; it reads DPIEEADETIE. Residues 554-563 show a composition bias toward low complexity; sequence AAKSAPSSSK. Composition is skewed to basic and acidic residues over residues 662–671 and 694–708; these read KKEEEHHEND and SEAS…KKEP. In terms of domain architecture, BRCT spans 923-1028; sequence IGKNIFTGKV…KCVDYTDYVL (106 aa).

In terms of tissue distribution, expressed in germ cells.

The protein localises to the nucleus. Functionally, may have a role in DNA double-strand break repair following gamma-irradiation. In Caenorhabditis elegans, this protein is Protein hsr-9.